The chain runs to 177 residues: Interleukin-1 receptor antagonist protein (177 aa).

An N-terminal signal peptide occupies residues 1-25 (MEIRRRSVRHLISLLLFLFYSETAC). Residues cysteine 91 and cysteine 141 are joined by a disulfide bond. N-linked (GlcNAc...) asparagine glycosylation occurs at asparagine 109.

This sequence belongs to the IL-1 family.

It is found in the secreted. Anti-inflammatory antagonist of interleukin-1 family of proinflammatory cytokines such as interleukin-1beta/IL1B and interleukin-1alpha/IL1A. Protects from immune dysregulation and uncontrolled systemic inflammation triggered by IL1 for a range of innate stimulatory agents such as pathogens. The polypeptide is Interleukin-1 receptor antagonist protein (IL1RN) (Equus caballus (Horse)).